A 145-amino-acid polypeptide reads, in one-letter code: Basic phospholipase A2 beta-bungarotoxin A-AL1 chain (145 aa).

The signal sequence occupies residues 1 to 17; it reads MLIFLWCGAVCVSLLGA. Residues 18 to 25 constitute a propeptide that is removed on maturation; sequence ANIPPHPL. Disulfide bonds link Cys-52–Cys-144, Cys-54–Cys-70, Cys-76–Cys-118, Cys-86–Cys-111, and Cys-104–Cys-116. Residues Tyr-53, Gly-55, and Gly-57 each contribute to the Ca(2+) site. His-73 is a catalytic residue. The active site involves Asp-119.

This sequence belongs to the phospholipase A2 family. Group I subfamily. G49 sub-subfamily. Heterodimer; disulfide-linked. The A chains have phospholipase A2 activity and the B chains show homology with the basic protease inhibitors. Ca(2+) is required as a cofactor. Post-translationally, this enzyme lacks one of the seven disulfide bonds found in similar PLA2 proteins. In terms of tissue distribution, expressed by the venom gland.

The protein localises to the secreted. The enzyme catalyses a 1,2-diacyl-sn-glycero-3-phosphocholine + H2O = a 1-acyl-sn-glycero-3-phosphocholine + a fatty acid + H(+). Its function is as follows. Snake venom phospholipase A2 (PLA2) that inhibits neuromuscular transmission by blocking acetylcholine release from the nerve termini. PLA2 catalyzes the calcium-dependent hydrolysis of the 2-acyl groups in 3-sn-phosphoglycerides. The sequence is that of Basic phospholipase A2 beta-bungarotoxin A-AL1 chain from Bungarus multicinctus (Many-banded krait).